The primary structure comprises 125 residues: Ribonuclease P protein component (125 aa).

The protein belongs to the RnpA family. As to quaternary structure, consists of a catalytic RNA component (M1 or rnpB) and a protein subunit.

It carries out the reaction Endonucleolytic cleavage of RNA, removing 5'-extranucleotides from tRNA precursor.. Its function is as follows. RNaseP catalyzes the removal of the 5'-leader sequence from pre-tRNA to produce the mature 5'-terminus. It can also cleave other RNA substrates such as 4.5S RNA. The protein component plays an auxiliary but essential role in vivo by binding to the 5'-leader sequence and broadening the substrate specificity of the ribozyme. This Clostridium perfringens (strain ATCC 13124 / DSM 756 / JCM 1290 / NCIMB 6125 / NCTC 8237 / Type A) protein is Ribonuclease P protein component.